Consider the following 184-residue polypeptide: Serine recombinase PinE (184 aa).

In terms of domain architecture, Resolvase/invertase-type recombinase catalytic spans 1–134 (MLIGYVRVST…AGLETARAQG (134 aa)). Ser-9 (O-(5'-phospho-DNA)-serine intermediate) is an active-site residue. The H-T-H motif DNA-binding region spans 161 to 180 (RQKVAIIYDVGVSTLYKRFP).

Belongs to the site-specific recombinase resolvase family.

This protein catalyzes the inversion of an 1800-bp E.coli DNA fragment, the P region, which can exist in either orientation. The function of the inversion is not yet clear. The protein is Serine recombinase PinE (pinE) of Escherichia coli (strain K12).